The sequence spans 443 residues: MSVSRIYIANVSYSSSEEDLREFLKDFNFSSVLIPCHTVRRFRRNEARSFGIAYVDFTSSEEAVRAVEELNGKEFGGRVLRVRTHNPYQPPKPIKERFGTKLQQLKKFAKYEDTAASGERAPTDAQDHPDQPQEGHMSPDVVLVNGTTDEEQQLANVINDPVTNADAPGTEQNISKEKAISEDTVYCAFLPKETTDNDLRNYFTDYGSREIWIFRTKNVSNSRFRFRNRNHTAALVTLSTELPLNKVIEELLGKKLLGTKISIKPAYIYKINEVKKIAEQSHMLATEYRHQNGNSDVVIGTPNEALLNSTQVASQIIGSNPEIEVSNQNSSSIANVAETNGNVGDTPITKLDSRNNIKIVNIGNPQDKTKKNQPNDNKELNKIDLETKNDSLHLESICDPIISIDMSGMTKQSVGSNKKKNKKKKSARGKEVRKLSVSNTTTQ.

Residues 4-87 enclose the RRM 1 domain; that stretch reads SRIYIANVSY…RVLRVRTHNP (84 aa). Residues 112–140 form a disordered region; the sequence is EDTAASGERAPTDAQDHPDQPQEGHMSPD. Basic and acidic residues predominate over residues 121 to 133; it reads APTDAQDHPDQPQ. The RRM 2 domain maps to 183 to 268; sequence DTVYCAFLPK…TKISIKPAYI (86 aa). The tract at residues 408–443 is disordered; that stretch reads GMTKQSVGSNKKKNKKKKSARGKEVRKLSVSNTTTQ. The segment covering 417–427 has biased composition (basic residues); it reads NKKKNKKKKSA.

This sequence belongs to the RRT5 family.

May be involved in the modulation of rDNA transcription. The sequence is that of Regulator of rDNA transcription protein 5 (RRT5) from Candida glabrata (strain ATCC 2001 / BCRC 20586 / JCM 3761 / NBRC 0622 / NRRL Y-65 / CBS 138) (Yeast).